The sequence spans 126 residues: Large ribosomal subunit protein bL17 (126 aa).

It belongs to the bacterial ribosomal protein bL17 family. In terms of assembly, part of the 50S ribosomal subunit. Contacts protein L32.

The chain is Large ribosomal subunit protein bL17 from Coxiella burnetii (strain CbuG_Q212) (Coxiella burnetii (strain Q212)).